We begin with the raw amino-acid sequence, 190 residues long: Imidazoleglycerol-phosphate dehydratase (190 aa).

The protein belongs to the imidazoleglycerol-phosphate dehydratase family.

Its subcellular location is the cytoplasm. The catalysed reaction is D-erythro-1-(imidazol-4-yl)glycerol 3-phosphate = 3-(imidazol-4-yl)-2-oxopropyl phosphate + H2O. Its pathway is amino-acid biosynthesis; L-histidine biosynthesis; L-histidine from 5-phospho-alpha-D-ribose 1-diphosphate: step 6/9. This is Imidazoleglycerol-phosphate dehydratase from Sulfurimonas denitrificans (strain ATCC 33889 / DSM 1251) (Thiomicrospira denitrificans (strain ATCC 33889 / DSM 1251)).